The sequence spans 204 residues: Large ribosomal subunit protein bL25 (204 aa).

This sequence belongs to the bacterial ribosomal protein bL25 family. CTC subfamily. Part of the 50S ribosomal subunit; part of the 5S rRNA/L5/L18/L25 subcomplex. Contacts the 5S rRNA. Binds to the 5S rRNA independently of L5 and L18.

This is one of the proteins that binds to the 5S RNA in the ribosome where it forms part of the central protuberance. This is Large ribosomal subunit protein bL25 from Pseudoalteromonas translucida (strain TAC 125).